Here is a 206-residue protein sequence, read N- to C-terminus: Macrophage immunometabolism regulator (206 aa).

Position 1 is an N-acetylmethionine (M1). A disordered region spans residues 1 to 41 (MEVDINGESRSTLTTLPFPGAEANSPGKAEAEKPRCSSTPC). A phosphoserine mark is found at S25, S140, and S167.

The protein belongs to the UNC119-binding protein family. Interacts with UNC119 and UNC119B; interaction preferentially takes place when UNC119 and UNC119B are unliganded with myristoylated proteins. In terms of processing, phosphorylated. High expression in normal macrophages, monocytes, and cultured rheumatoid arthritis synovial fibroblasts (RASFs), with lower expression in B- and T-cells, and little to no expression in other tissues and cell lines.

Its subcellular location is the cytoplasm. The protein localises to the cell projection. The protein resides in the cilium. In terms of biological role, regulates the macrophage function, by enhancing the resolution of inflammation and wound repair functions mediated by M2 macrophages. The regulation of macrophage function is, due at least in part, to its ability to inhibit glycolysis. May also play a role in trafficking of proteins via its interaction with UNC119 and UNC119B cargo adapters: may help the release of UNC119 and UNC119B cargo or the recycling of UNC119 and UNC119B. May play a role in ciliary membrane localization via its interaction with UNC119B and protein transport into photoreceptor cells. The polypeptide is Macrophage immunometabolism regulator (Homo sapiens (Human)).